The chain runs to 402 residues: Dual-specificity RNA methyltransferase RlmN (402 aa).

Glu124 (proton acceptor) is an active-site residue. The region spanning 130–370 is the Radical SAM core domain; the sequence is DADRGTLCVS…APVRTPRGRD (241 aa). The cysteines at positions 137 and 375 are disulfide-linked. 3 residues coordinate [4Fe-4S] cluster: Cys144, Cys148, and Cys151. S-adenosyl-L-methionine-binding positions include 199–200, Ser231, 253–255, and Asn332; these read GE and SLH. The S-methylcysteine intermediate role is filled by Cys375.

The protein belongs to the radical SAM superfamily. RlmN family. Requires [4Fe-4S] cluster as cofactor.

The protein localises to the cytoplasm. The enzyme catalyses adenosine(2503) in 23S rRNA + 2 reduced [2Fe-2S]-[ferredoxin] + 2 S-adenosyl-L-methionine = 2-methyladenosine(2503) in 23S rRNA + 5'-deoxyadenosine + L-methionine + 2 oxidized [2Fe-2S]-[ferredoxin] + S-adenosyl-L-homocysteine. The catalysed reaction is adenosine(37) in tRNA + 2 reduced [2Fe-2S]-[ferredoxin] + 2 S-adenosyl-L-methionine = 2-methyladenosine(37) in tRNA + 5'-deoxyadenosine + L-methionine + 2 oxidized [2Fe-2S]-[ferredoxin] + S-adenosyl-L-homocysteine. Specifically methylates position 2 of adenine 2503 in 23S rRNA and position 2 of adenine 37 in tRNAs. m2A2503 modification seems to play a crucial role in the proofreading step occurring at the peptidyl transferase center and thus would serve to optimize ribosomal fidelity. The polypeptide is Dual-specificity RNA methyltransferase RlmN (Rhizorhabdus wittichii (strain DSM 6014 / CCUG 31198 / JCM 15750 / NBRC 105917 / EY 4224 / RW1) (Sphingomonas wittichii)).